The following is a 126-amino-acid chain: Large ribosomal subunit protein bL12 (126 aa).

The protein belongs to the bacterial ribosomal protein bL12 family. In terms of assembly, homodimer. Part of the ribosomal stalk of the 50S ribosomal subunit. Forms a multimeric L10(L12)X complex, where L10 forms an elongated spine to which 2 to 4 L12 dimers bind in a sequential fashion. Binds GTP-bound translation factors.

Functionally, forms part of the ribosomal stalk which helps the ribosome interact with GTP-bound translation factors. Is thus essential for accurate translation. This chain is Large ribosomal subunit protein bL12, found in Beijerinckia indica subsp. indica (strain ATCC 9039 / DSM 1715 / NCIMB 8712).